Here is a 386-residue protein sequence, read N- to C-terminus: CUE domain-containing protein 1 (386 aa).

Residues 1–10 (MTSLFRRSSS) are compositionally biased toward low complexity. Residues 1–40 (MTSLFRRSSSGSGGGGTAGARGGGGGTAAPQELNNSRPAR) form a disordered region. The span at 11–27 (GSGGGGTAGARGGGGGT) shows a compositional bias: gly residues. One can recognise a CUE domain in the interval 46-89 (EFNQAMDDFKTMFPNMDYDIIECVLRANSGAVDATIDQLLQMNL). 3 disordered regions span residues 147-172 (LAPPTPPPRIDALGSGAPTSQRRYRN), 195-225 (SIQGNAGGPKPGSGEGCPPAMAGPGPGDQES), and 367-386 (DFRGRRQEAPKVEEGLREGQ). A compositionally biased stretch (gly residues) spans 199–209 (NAGGPKPGSGE).

The chain is CUE domain-containing protein 1 (CUEDC1) from Homo sapiens (Human).